The sequence spans 458 residues: ATP synthase subunit beta (458 aa).

148–155 is a binding site for ATP; it reads GGAGVGKT.

Belongs to the ATPase alpha/beta chains family. As to quaternary structure, F-type ATPases have 2 components, CF(1) - the catalytic core - and CF(0) - the membrane proton channel. CF(1) has five subunits: alpha(3), beta(3), gamma(1), delta(1), epsilon(1). CF(0) has three main subunits: a(1), b(2) and c(9-12). The alpha and beta chains form an alternating ring which encloses part of the gamma chain. CF(1) is attached to CF(0) by a central stalk formed by the gamma and epsilon chains, while a peripheral stalk is formed by the delta and b chains.

The protein resides in the cell inner membrane. The catalysed reaction is ATP + H2O + 4 H(+)(in) = ADP + phosphate + 5 H(+)(out). Produces ATP from ADP in the presence of a proton gradient across the membrane. The catalytic sites are hosted primarily by the beta subunits. In Pseudomonas fluorescens (strain Pf0-1), this protein is ATP synthase subunit beta.